Consider the following 506-residue polypeptide: Histidine--tRNA ligase, mitochondrial (506 aa).

The transit peptide at 1–33 (MPLLGLLPRRAWASLLSQLLRPPCASCTGAVRC) directs the protein to the mitochondrion. Ser67 is subject to Phosphoserine. Residues 131-133 (DLT), Arg158, Gln174, Asp178, Arg327, and 331-332 (YY) each bind L-histidine. Lys444 carries the post-translational modification N6-acetyllysine.

Belongs to the class-II aminoacyl-tRNA synthetase family. Homodimer. In terms of tissue distribution, a high level expression is seen in the heart, kidney and skeletal muscle while a lower level expression is seen in the brain and liver.

It is found in the mitochondrion. It catalyses the reaction tRNA(His) + L-histidine + ATP = L-histidyl-tRNA(His) + AMP + diphosphate + H(+). Functionally, mitochondrial aminoacyl-tRNA synthetase that catalyzes the ATP-dependent ligation of histidine to the 3'-end of its cognate tRNA, via the formation of an aminoacyl-adenylate intermediate (His-AMP). This chain is Histidine--tRNA ligase, mitochondrial (HARS2), found in Homo sapiens (Human).